The chain runs to 203 residues: Cytochrome c oxidase assembly protein CtaG (203 aa).

At 1 to 16 the chain is on the cytoplasmic side; that stretch reads MADQQEKDQKLKKQQR. The helical; Signal-anchor for type II membrane protein transmembrane segment at 17 to 39 threads the bilayer; the sequence is SNATIAFACLSFFVCMIGAAYAS. Residues 40–203 lie on the Periplasmic side of the membrane; it reads VPLYRIFCQV…VKAETPTNGS (164 aa).

This sequence belongs to the COX11/CtaG family.

The protein resides in the cell inner membrane. Functionally, exerts its effect at some terminal stage of cytochrome c oxidase synthesis, probably by being involved in the insertion of the copper B into subunit I. This Brucella anthropi (strain ATCC 49188 / DSM 6882 / CCUG 24695 / JCM 21032 / LMG 3331 / NBRC 15819 / NCTC 12168 / Alc 37) (Ochrobactrum anthropi) protein is Cytochrome c oxidase assembly protein CtaG.